Reading from the N-terminus, the 414-residue chain is Isocitrate dehydrogenase [NADP] cytoplasmic (414 aa).

Position 2 is an N-acetylserine (Ser-2). Tyr-42 is subject to Phosphotyrosine. 75–77 (TIT) is a binding site for NADP(+). Thr-77 lines the substrate pocket. Lys-81 is modified (N6-acetyllysine). Arg-82 provides a ligand contact to NADP(+). Substrate contacts are provided by residues 94 to 100 (SPNGTIR) and Arg-109. N6-succinyllysine is present on Lys-126. Arg-132 and Lys-212 together coordinate substrate. Residues Lys-224, Lys-233, and Lys-243 each carry the N6-acetyllysine modification. Asp-252 contributes to the Mn(2+) binding site. Lys-260 contacts NADP(+). Mn(2+) is bound by residues Asp-275 and Asp-279. 310–315 (GTVTRH) is a binding site for NADP(+). Lys-321 carries the N6-acetyllysine modification. Asn-328 contacts NADP(+). Ser-389 carries the post-translational modification Phosphoserine. Residue Lys-400 is modified to N6-succinyllysine.

It belongs to the isocitrate and isopropylmalate dehydrogenases family. As to quaternary structure, homodimer. Mg(2+) is required as a cofactor. It depends on Mn(2+) as a cofactor. Acetylation at Lys-374 dramatically reduces catalytic activity.

The protein localises to the cytoplasm. The protein resides in the cytosol. The enzyme catalyses D-threo-isocitrate + NADP(+) = 2-oxoglutarate + CO2 + NADPH. Catalyzes the NADP(+)-dependent oxidative decarboxylation of isocitrate (D-threo-isocitrate) to 2-ketoglutarate (2-oxoglutarate), which is required by other enzymes such as the phytanoyl-CoA dioxygenase. Plays a critical role in the generation of NADPH, an important cofactor in many biosynthesis pathways. May act as a corneal epithelial crystallin and may be involved in maintaining corneal epithelial transparency. The protein is Isocitrate dehydrogenase [NADP] cytoplasmic (IDH1) of Microtus ochrogaster (Prairie vole).